The chain runs to 150 residues: Large ribosomal subunit protein bL9 (150 aa).

It belongs to the bacterial ribosomal protein bL9 family.

In terms of biological role, binds to the 23S rRNA. This Arthrobacter sp. (strain FB24) protein is Large ribosomal subunit protein bL9.